We begin with the raw amino-acid sequence, 364 residues long: Chorismate synthase (364 aa).

NADP(+)-binding residues include arginine 48 and arginine 54. FMN is bound by residues 125–127 (RSS), 238–239 (NA), glycine 278, 293–297 (KPTSS), and arginine 319.

Belongs to the chorismate synthase family. Homotetramer. It depends on FMNH2 as a cofactor.

It carries out the reaction 5-O-(1-carboxyvinyl)-3-phosphoshikimate = chorismate + phosphate. The protein operates within metabolic intermediate biosynthesis; chorismate biosynthesis; chorismate from D-erythrose 4-phosphate and phosphoenolpyruvate: step 7/7. Catalyzes the anti-1,4-elimination of the C-3 phosphate and the C-6 proR hydrogen from 5-enolpyruvylshikimate-3-phosphate (EPSP) to yield chorismate, which is the branch point compound that serves as the starting substrate for the three terminal pathways of aromatic amino acid biosynthesis. This reaction introduces a second double bond into the aromatic ring system. This is Chorismate synthase from Shewanella woodyi (strain ATCC 51908 / MS32).